Consider the following 411-residue polypeptide: Pyridinium-3,5-bisthiocarboxylic acid mononucleotide nickel insertion protein (411 aa).

Belongs to the LarC family.

It carries out the reaction Ni(II)-pyridinium-3,5-bisthiocarboxylate mononucleotide = pyridinium-3,5-bisthiocarboxylate mononucleotide + Ni(2+). Functionally, involved in the biosynthesis of a nickel-pincer cofactor ((SCS)Ni(II) pincer complex). Binds Ni(2+), and functions in nickel delivery to pyridinium-3,5-bisthiocarboxylic acid mononucleotide (P2TMN), to form the mature cofactor. Is thus probably required for the activation of nickel-pincer cofactor-dependent enzymes. The protein is Pyridinium-3,5-bisthiocarboxylic acid mononucleotide nickel insertion protein of Geobacillus kaustophilus (strain HTA426).